Reading from the N-terminus, the 552-residue chain is Dihydroxy-acid dehydratase (552 aa).

Residue Asp-78 coordinates Mg(2+). Cys-119 lines the [2Fe-2S] cluster pocket. Mg(2+) contacts are provided by Asp-120 and Lys-121. N6-carboxylysine is present on Lys-121. Cys-191 lines the [2Fe-2S] cluster pocket. Residue Glu-442 coordinates Mg(2+). Ser-468 acts as the Proton acceptor in catalysis.

Belongs to the IlvD/Edd family. Homodimer. [2Fe-2S] cluster serves as cofactor. It depends on Mg(2+) as a cofactor.

It catalyses the reaction (2R)-2,3-dihydroxy-3-methylbutanoate = 3-methyl-2-oxobutanoate + H2O. The catalysed reaction is (2R,3R)-2,3-dihydroxy-3-methylpentanoate = (S)-3-methyl-2-oxopentanoate + H2O. It functions in the pathway amino-acid biosynthesis; L-isoleucine biosynthesis; L-isoleucine from 2-oxobutanoate: step 3/4. Its pathway is amino-acid biosynthesis; L-valine biosynthesis; L-valine from pyruvate: step 3/4. Functionally, functions in the biosynthesis of branched-chain amino acids. Catalyzes the dehydration of (2R,3R)-2,3-dihydroxy-3-methylpentanoate (2,3-dihydroxy-3-methylvalerate) into 2-oxo-3-methylpentanoate (2-oxo-3-methylvalerate) and of (2R)-2,3-dihydroxy-3-methylbutanoate (2,3-dihydroxyisovalerate) into 2-oxo-3-methylbutanoate (2-oxoisovalerate), the penultimate precursor to L-isoleucine and L-valine, respectively. The polypeptide is Dihydroxy-acid dehydratase (Clostridium botulinum (strain Alaska E43 / Type E3)).